Consider the following 67-residue polypeptide: Tachystatin-A2 (67 aa).

The first 23 residues, 1–23 (MKLQNTLILIGCLFLMGAMIGDA), serve as a signal peptide directing secretion. Intrachain disulfides connect cysteine 27–cysteine 47, cysteine 34–cysteine 52, and cysteine 46–cysteine 64.

As to expression, granular hemocytes, small secretory granules.

Its subcellular location is the secreted. In terms of biological role, exhibits stronger antimicrobial activity against the Gram-positive bacteria (S.aureus (IC(50)=4.2 ug/ml)) and fungi (C.albicans (IC(50)=3.0 ug/ml) and P.pastoris (IC(50)=0.5 ug/ml)) than Gram-negative bacteria (E.coli (IC(50)=25 ug/ml)). Binds to chitin (8.4 uM are required to obtain 50% of binding). Does not cause hemolysis on sheep erythrocytes. Has no blocking activity on the P-type calcium channel. Has also been shown to weakly inhibit Kv1.2/KCNA2 voltage-gated potassium channels and TRPV1 receptors. The chain is Tachystatin-A2 from Tachypleus tridentatus (Japanese horseshoe crab).